A 152-amino-acid chain; its full sequence is Large ribosomal subunit protein bL9 (152 aa).

Belongs to the bacterial ribosomal protein bL9 family.

Functionally, binds to the 23S rRNA. The sequence is that of Large ribosomal subunit protein bL9 from Prochlorococcus marinus (strain MIT 9211).